We begin with the raw amino-acid sequence, 274 residues long: Shikimate dehydrogenase (NADP(+)) (274 aa).

Residues Ser14–Ser16 and Thr60 contribute to the shikimate site. Lys64 functions as the Proton acceptor in the catalytic mechanism. Glu76 is a binding site for NADP(+). 2 residues coordinate shikimate: Asn85 and Asp101. Residues Gly126–Ala130, Asn150–Lys155, and Met214 each bind NADP(+). Residue Tyr216 coordinates shikimate. Gly238 provides a ligand contact to NADP(+).

This sequence belongs to the shikimate dehydrogenase family. Homodimer.

It catalyses the reaction shikimate + NADP(+) = 3-dehydroshikimate + NADPH + H(+). Its pathway is metabolic intermediate biosynthesis; chorismate biosynthesis; chorismate from D-erythrose 4-phosphate and phosphoenolpyruvate: step 4/7. Involved in the biosynthesis of the chorismate, which leads to the biosynthesis of aromatic amino acids. Catalyzes the reversible NADPH linked reduction of 3-dehydroshikimate (DHSA) to yield shikimate (SA). This is Shikimate dehydrogenase (NADP(+)) from Pseudomonas aeruginosa (strain ATCC 15692 / DSM 22644 / CIP 104116 / JCM 14847 / LMG 12228 / 1C / PRS 101 / PAO1).